The sequence spans 30 residues: L-serine dehydratase, alpha chain (30 aa).

It belongs to the iron-sulfur dependent L-serine dehydratase family. In terms of assembly, heterodimer of an alpha chain and a beta chain. Requires [4Fe-4S] cluster as cofactor.

The enzyme catalyses L-serine = pyruvate + NH4(+). The protein operates within carbohydrate biosynthesis; gluconeogenesis. The polypeptide is L-serine dehydratase, alpha chain (Anaerotignum propionicum (Clostridium propionicum)).